We begin with the raw amino-acid sequence, 309 residues long: Dermonecrotic toxin LarSicTox-alphaIB2bi (309 aa).

A signal peptide is located at residue valine 1. Positions 2-27 are excised as a propeptide; the sequence is RATEKFAPIYFFCHPLQSAETDVAER. Histidine 38 is an active-site residue. Positions 58 and 60 each coordinate Mg(2+). The active-site Nucleophile is the histidine 74. Intrachain disulfides connect cysteine 78-cysteine 84 and cysteine 80-cysteine 223. Residue aspartate 118 participates in Mg(2+) binding. N-linked (GlcNAc...) asparagine glycosylation is present at asparagine 286.

The protein belongs to the arthropod phospholipase D family. Class II subfamily. The cofactor is Mg(2+). In terms of tissue distribution, expressed by the venom gland.

Its subcellular location is the secreted. The enzyme catalyses an N-(acyl)-sphingosylphosphocholine = an N-(acyl)-sphingosyl-1,3-cyclic phosphate + choline. It catalyses the reaction N-hexanoyl-sphing-4-enine-1-phosphocholine = N-(hexanoyl)-sphing-4-enine-1,3-cyclic phosphate + choline. The catalysed reaction is N-(dodecanoyl)-sphing-4-enine-1-phosphocholine = N-dodecanoyl-sphing-4-enine-1,3-cyclic phosphate + choline. It carries out the reaction a 1-acyl-sn-glycero-3-phosphocholine = a 1-acyl-sn-glycero-2,3-cyclic phosphate + choline. The enzyme catalyses 1-tetradecanoyl-sn-glycero-3-phosphocholine = 1-tetradecanoyl-sn-glycero-2,3-cyclic phosphate + choline. It catalyses the reaction 1-octanoyl-sn-glycero-3-phosphocholine = 1-octanoyl-sn-glycero-2,3-cyclic phosphate + choline. The catalysed reaction is 1-hexadecanoyl-sn-glycero-3-phosphocholine = 1-hexadecanoyl-sn-glycero-2,3-cyclic phosphate + choline. It carries out the reaction an N-(acyl)-sphingosylphosphoethanolamine = an N-(acyl)-sphingosyl-1,3-cyclic phosphate + ethanolamine. The enzyme catalyses N-dodecanoyl-heptadecasphing-4-enine-1-phosphoethanolamine = N-dodecanoyl-heptadecasphing-4-enine-1,3-cyclic phosphate + ethanolamine. Functionally, dermonecrotic toxins cleave the phosphodiester linkage between the phosphate and headgroup of certain phospholipids (sphingolipid and lysolipid substrates), forming an alcohol (often choline) and a cyclic phosphate. This toxin acts on sphingomyelin (SM) with high activity and on lysophosphatidylcholine (LPC) and ceramide phosphoethanolamine (CPE) with low activity. In vivo, shows potent insecticidal activities. On mammals, induces dermonecrosis, hemolysis, increased vascular permeability, edema, inflammatory response, and platelet aggregation. This is Dermonecrotic toxin LarSicTox-alphaIB2bi from Loxosceles arizonica (Arizona brown spider).